Reading from the N-terminus, the 422-residue chain is UDP-N-acetylglucosamine 1-carboxyvinyltransferase (422 aa).

Residue 22-23 (KN) participates in phosphoenolpyruvate binding. A UDP-N-acetyl-alpha-D-glucosamine-binding site is contributed by Arg-95. Cys-119 (proton donor) is an active-site residue. The residue at position 119 (Cys-119) is a 2-(S-cysteinyl)pyruvic acid O-phosphothioketal. Residues 124–128 (RPIDQ), Asp-309, and Val-331 each bind UDP-N-acetyl-alpha-D-glucosamine.

This sequence belongs to the EPSP synthase family. MurA subfamily.

It is found in the cytoplasm. The enzyme catalyses phosphoenolpyruvate + UDP-N-acetyl-alpha-D-glucosamine = UDP-N-acetyl-3-O-(1-carboxyvinyl)-alpha-D-glucosamine + phosphate. Its pathway is cell wall biogenesis; peptidoglycan biosynthesis. Cell wall formation. Adds enolpyruvyl to UDP-N-acetylglucosamine. This chain is UDP-N-acetylglucosamine 1-carboxyvinyltransferase, found in Anaeromyxobacter dehalogenans (strain 2CP-C).